A 20-amino-acid chain; its full sequence is Small ribosomal subunit protein bS20 (20 aa).

Residues 1–20 (ANNPGARKAIRKIEARTEVN) form a disordered region. Residues 11–20 (RKIEARTEVN) are compositionally biased toward basic and acidic residues.

Belongs to the bacterial ribosomal protein bS20 family.

In terms of biological role, binds directly to 16S ribosomal RNA. This Brevundimonas vesicularis (Pseudomonas vesicularis) protein is Small ribosomal subunit protein bS20 (rpsT).